The sequence spans 246 residues: AA9 family lytic polysaccharide monooxygenase D (246 aa).

The N-terminal stretch at 1 to 19 (MHLLSLLFPVIALIPTVLS) is a signal peptide. His-20 serves as a coordination point for Cu(2+). Cys-78 and Cys-196 form a disulfide bridge. N-linked (GlcNAc...) asparagine glycosylation is found at Asn-86, Asn-141, and Asn-156. O2-binding residues include His-182 and Gln-191. Cu(2+) is bound at residue Tyr-193. Asn-235 carries an N-linked (GlcNAc...) asparagine glycan.

The protein belongs to the polysaccharide monooxygenase AA9 family. It depends on Cu(2+) as a cofactor.

The protein localises to the secreted. It catalyses the reaction [(1-&gt;4)-beta-D-glucosyl]n+m + reduced acceptor + O2 = 4-dehydro-beta-D-glucosyl-[(1-&gt;4)-beta-D-glucosyl]n-1 + [(1-&gt;4)-beta-D-glucosyl]m + acceptor + H2O.. Functionally, lytic polysaccharide monooxygenase (LPMO) that depolymerizes crystalline and amorphous polysaccharides via the oxidation of scissile alpha- or beta-(1-4)-glycosidic bonds, yielding C1 and C4 oxidation products. Catalysis by LPMOs requires the reduction of the active-site copper from Cu(II) to Cu(I) by a reducing agent and H(2)O(2) or O(2) as a cosubstrate. This Botryotinia fuckeliana (strain B05.10) (Noble rot fungus) protein is AA9 family lytic polysaccharide monooxygenase D.